The following is a 116-amino-acid chain: Ribosome-binding factor A (116 aa).

The protein belongs to the RbfA family. In terms of assembly, monomer. Binds 30S ribosomal subunits, but not 50S ribosomal subunits or 70S ribosomes.

The protein resides in the cytoplasm. One of several proteins that assist in the late maturation steps of the functional core of the 30S ribosomal subunit. Associates with free 30S ribosomal subunits (but not with 30S subunits that are part of 70S ribosomes or polysomes). Required for efficient processing of 16S rRNA. May interact with the 5'-terminal helix region of 16S rRNA. This is Ribosome-binding factor A from Streptococcus agalactiae.